The following is a 511-amino-acid chain: Bifunctional purine biosynthesis protein PurH (511 aa).

Residues 1–146 (MARLALLSVS…KNFAHTTVLT (146 aa)) enclose the MGS-like domain.

Belongs to the PurH family.

It carries out the reaction (6R)-10-formyltetrahydrofolate + 5-amino-1-(5-phospho-beta-D-ribosyl)imidazole-4-carboxamide = 5-formamido-1-(5-phospho-D-ribosyl)imidazole-4-carboxamide + (6S)-5,6,7,8-tetrahydrofolate. The enzyme catalyses IMP + H2O = 5-formamido-1-(5-phospho-D-ribosyl)imidazole-4-carboxamide. It participates in purine metabolism; IMP biosynthesis via de novo pathway; 5-formamido-1-(5-phospho-D-ribosyl)imidazole-4-carboxamide from 5-amino-1-(5-phospho-D-ribosyl)imidazole-4-carboxamide (10-formyl THF route): step 1/1. Its pathway is purine metabolism; IMP biosynthesis via de novo pathway; IMP from 5-formamido-1-(5-phospho-D-ribosyl)imidazole-4-carboxamide: step 1/1. This chain is Bifunctional purine biosynthesis protein PurH, found in Synechocystis sp. (strain ATCC 27184 / PCC 6803 / Kazusa).